Consider the following 185-residue polypeptide: Ribosome-recycling factor (185 aa).

This sequence belongs to the RRF family.

It localises to the cytoplasm. Its function is as follows. Responsible for the release of ribosomes from messenger RNA at the termination of protein biosynthesis. May increase the efficiency of translation by recycling ribosomes from one round of translation to another. The sequence is that of Ribosome-recycling factor from Alteromonas mediterranea (strain DSM 17117 / CIP 110805 / LMG 28347 / Deep ecotype).